Reading from the N-terminus, the 748-residue chain is 5-methyltetrahydropteroyltriglutamate--homocysteine methyltransferase (748 aa).

5-methyltetrahydropteroyltri-L-glutamate contacts are provided by residues 18-21 (REWK) and lysine 112. Residues 420–422 (IGS) and glutamate 473 each bind L-homocysteine. L-methionine-binding positions include 420–422 (IGS) and glutamate 473. Position 550 (tryptophan 550) interacts with 5-methyltetrahydropteroyltri-L-glutamate. Aspartate 588 contacts L-homocysteine. Aspartate 588 contacts L-methionine. Residue glutamate 594 coordinates 5-methyltetrahydropteroyltri-L-glutamate. Histidine 630, cysteine 632, and glutamate 654 together coordinate Zn(2+). Histidine 683 serves as the catalytic Proton donor. Cysteine 715 is a binding site for Zn(2+).

Belongs to the vitamin-B12 independent methionine synthase family. Requires Zn(2+) as cofactor.

The enzyme catalyses 5-methyltetrahydropteroyltri-L-glutamate + L-homocysteine = tetrahydropteroyltri-L-glutamate + L-methionine. It functions in the pathway amino-acid biosynthesis; L-methionine biosynthesis via de novo pathway; L-methionine from L-homocysteine (MetE route): step 1/1. In terms of biological role, catalyzes the transfer of a methyl group from 5-methyltetrahydrofolate to homocysteine resulting in methionine formation. The sequence is that of 5-methyltetrahydropteroyltriglutamate--homocysteine methyltransferase from Staphylococcus epidermidis (strain ATCC 35984 / DSM 28319 / BCRC 17069 / CCUG 31568 / BM 3577 / RP62A).